Here is a 944-residue protein sequence, read N- to C-terminus: E3 ubiquitin-protein ligase JMJ24 (944 aa).

Disordered regions lie at residues 20–40 (QTRSANGIGNGNGESIPGIPD) and 77–103 (ANSAFRANQKKAKRRSSLGETDTYSEG). Residues 38–83 (IPDDLRCKRSDGKQWRCTAMSMADKTVCEKHYIQAKKRAANSAFRA) form the WRC domain. The Nuclear localization signal 1 motif lies at 73–80 (KKRAANSA). The PHD-type; atypical zinc finger occupies 217–269 (GEICHQCQRKDRERIISCLKCNQRAFCHNCLSARYSEISLEEVEKVCPACRGL). Residues cysteine 220, cysteine 223, cysteine 234, cysteine 237, cysteine 243, cysteine 246, cysteine 263, and cysteine 266 each contribute to the Zn(2+) site. The Nuclear localization signal 2 signature appears at 323–330 (EKRLREVE). A JmjC domain is found at 621-873 (PRLGLLNVAA…ESARLAEEIR (253 aa)). The segment covering 685–703 (ERVRKTKPVPEEPDQKMSE) has biased composition (basic and acidic residues). Residues 685 to 715 (ERVRKTKPVPEEPDQKMSENESLLSPEQKLR) form a disordered region.

The protein belongs to the JARID1 histone demethylase family. As to quaternary structure, homodimer. Interacts with RDR2. Binds to CMT3. Associates with the E2 ubiquitin-conjugating enzyme UBC10. In terms of processing, self-ubiquitinates. As to expression, expressed in inflorescences, flowers, roots, siliques, leaves and stems, especially in the vasculature (mainly phloem), with highest levels in floral organs.

The protein localises to the nucleus. The catalysed reaction is S-ubiquitinyl-[E2 ubiquitin-conjugating enzyme]-L-cysteine + [acceptor protein]-L-lysine = [E2 ubiquitin-conjugating enzyme]-L-cysteine + N(6)-ubiquitinyl-[acceptor protein]-L-lysine.. Binds histone H3 but seems to have lost demethylase activity probably due to its inability to bind iron Fe(2+). Possesses E3 ubiquitin ligase activity and targets directly CMT3 for proteasomal degradation to initiate destabilization of the heterochromatic state (e.g. CHG cytosine methylation and H3K9me2) of endogenous silenced loci. Required for the removal of repressive H3K9me2 histone marks to facilitate the transcription of AtSN1, AtMu1c, solo LTR and SDC, thus counteracting their transcriptional silencing. Mainly required to promote the basal level transcription of silenced loci such as TE and repeats targeted by RNA-dependent DNA methylation (RdDM) for silencing, a specialized branch of the RNA interference (RNAi) pathway. Also cooperates with RNAi pathways for gene silencing both by contributing to the production of 24-nt siRNA to initiate RdDM and by recruiting RDR2 to enable local transcripts to make dsRNA. Antagonizes histone H3K9 demethylase IBM1/JMJ25 function. This Arabidopsis thaliana (Mouse-ear cress) protein is E3 ubiquitin-protein ligase JMJ24.